Reading from the N-terminus, the 160-residue chain is Interleukin-36 alpha (160 aa).

Residues 1–7 (MNKEKEL) constitute a propeptide that is removed on maturation. The residue at position 98 (Y98) is a 3'-nitrotyrosine.

It belongs to the IL-1 family. As to quaternary structure, interacts with TMED10; the interaction mediates the translocation from the cytoplasm into the ERGIC (endoplasmic reticulum-Golgi intermediate compartment) and thereby secretion. N-terminal truncation leads to a dramatic enhancement of its activity (&gt;1000-fold). In terms of tissue distribution, highly expressed in embryonic tissue and in tissues containing epithelial cells. Elevated expression levels are detected in chronic kidney disease; expressed inepithelia from the distal convoluted tubules (DCTs) to the cortical collecting ducts (CCDs) in single nephrons (at protein level).

It is found in the cytoplasm. The protein localises to the secreted. Cytokine that binds to and signals through the IL1RL2/IL-36R receptor which in turn activates NF-kappa-B and MAPK signaling pathways in target cells linked to a pro-inflammatory response. Part of the IL-36 signaling system that is thought to be present in epithelial barriers and to take part in local inflammatory response; similar to the IL-1 system with which it shares the coreceptor IL1RAP. Seems to be involved in skin inflammatory response by acting on keratinocytes, dendritic cells and indirectly on T-cells to drive tissue infiltration, cell maturation and cell proliferation. Induces the production of pro-inflammatory cytokines, including IL-12, Il-1 beta, IL-6, TNF-alpha and IL-23 in bone marrow-derived dendritic cells (BMDCs). Involved in dendritic cell maturation by stimulating the surface expression of CD80, CD86 and MHC class II. Induces the production of IFN-gamma, IL-4 and IL-17 by cultured CD4(+) T-cells and splenocytes. May play a role in pro-inflammatory effects in the lung: induces the expression of CXCL1 and CXCL2 in the lung, and the expression of TNF-alpha, IL-36c, IL-1A, IL-1B, CXCL1 and CXCL2 in isolated splenic CD11c(+) alveolar macrophages. May be involved in T-cell maturation by stimulating the surface expression of CD40 and modestly CD80 and CD86 in splenic CD11c(+) cells. May be involved in CD4(+) T-cell proliferation. Induces NF-kappa B activation in macrophages. The sequence is that of Interleukin-36 alpha from Mus musculus (Mouse).